The following is a 487-amino-acid chain: Cyclic AMP-dependent transcription factor ATF-2 (487 aa).

The segment at 7–31 adopts a C2H2-type zinc-finger fold; that stretch reads FLCTAPGCGQRFTNEDHLAVHKHKH. Threonine 34 is modified (phosphothreonine; by PKC/PRKCH). Serine 44 is modified (phosphoserine; by VRK1). Residues threonine 51 and threonine 53 each carry the phosphothreonine modification. Threonine 55 is subject to Phosphothreonine; by VRK1. A phosphoserine mark is found at serine 72 and serine 94. Phosphothreonine is present on threonine 98. Serine 103 is subject to Phosphoserine; by PKC/PRKCA and PKC/PRKCB. Disordered regions lie at residues 107–130 and 241–355; these read EPSVVETTHQDSPLPHPESTTNDE and PGIP…RQKR. Phosphoserine is present on serine 118. Residues 264–275 show a composition bias toward polar residues; sequence LTQQHPPVTNGD. Positions 278-281 are essential for its histone acetyltransferase activity; the sequence is KGHG. Over residues 300 to 316 the composition is skewed to low complexity; it reads PATSTTETPASPAHTTP. Serine 310 is subject to Phosphoserine. Serine 322 carries the post-translational modification Phosphoserine; by PKC/PRKCA and PKC/PRKCB. Residues 328-345 show a composition bias toward basic and acidic residues; that stretch reads AANEDPDEKRRKFLERNR. A bZIP domain is found at 334–397; it reads DEKRRKFLER…AQLKQLLLAH (64 aa). The basic motif stretch occupies residues 336 to 356; the sequence is KRRKFLERNRAAASRCRQKRK. Lysine 339 carries the N6-acetyllysine modification. Serine 349 is modified (phosphoserine; by PKC/PRKCA and PKC/PRKCB). The residue at position 356 (lysine 356) is an N6-acetyllysine. Positions 362–390 are leucine-zipper; sequence LEKKAEDLSSLNGQLQSEVTLLRNEVAQL. The Nuclear export signal motif lies at 387-396; it reads VAQLKQLLLA. The disordered stretch occupies residues 407–487; the sequence is KKSGYHTADK…PSSQAQPSGS (81 aa). Phosphoserine is present on residues serine 424 and serine 428. A compositionally biased stretch (polar residues) spans 425-436; that stretch reads VPSSPHTEAIQH. The span at 437-449 shows a compositional bias: low complexity; that stretch reads SSVSTSNGVSSTS. Positions 457-470 are enriched in polar residues; sequence SVLTQMADQSTEPA. A phosphoserine; by ATM mark is found at serine 472 and serine 480. Residues 478–487 show a composition bias toward polar residues; the sequence is PSSQAQPSGS.

This sequence belongs to the bZIP family. ATF subfamily. In terms of assembly, binds DNA as a dimer and can form a homodimer in the absence of DNA. Can form a heterodimer with JUN. Heterodimerization is essential for its transcriptional activity. Interacts with SMAD3 and SMAD4. Binds through its N-terminal region to UTF1 which acts as a coactivator of ATF2 transcriptional activity. Interacts with the HK1/VDAC1 complex. Interacts with NBN, MRE11, XPO1, KAT5 and CUL3. Phosphorylation of Thr-51 by MAPK14 and MAPK11, and at Thr-53 by MAPK1/ERK2, MAPK3/ERK1, MAPK11, MAPK12 and MAPK14 in response to external stimulus like insulin causes increased transcriptional activity. Phosphorylated by PLK3 following hyperosmotic stress. Also phosphorylated and activated by JNK and CaMK4. ATM-mediated phosphorylation at Ser-472 and Ser-480 stimulates its function in DNA damage response. Phosphorylation at Ser-44, Thr-55 and Ser-103 activates its transcriptional activity. Phosphorylation at Thr-51 or Thr-53 enhances acetylation of histones H2B and H4.

The protein localises to the nucleus. Its subcellular location is the cytoplasm. The protein resides in the mitochondrion outer membrane. Its function is as follows. Transcriptional activator which regulates the transcription of various genes, including those involved in anti-apoptosis, cell growth, and DNA damage response. Dependent on its binding partner, binds to CRE (cAMP response element) consensus sequences (5'-TGACGTCA-3') or to AP-1 (activator protein 1) consensus sequences (5'-TGACTCA-3'). In the nucleus, contributes to global transcription and the DNA damage response, in addition to specific transcriptional activities that are related to cell development, proliferation and death. In the cytoplasm, interacts with and perturbs HK1- and VDAC1-containing complexes at the mitochondrial outer membrane, thereby impairing mitochondrial membrane potential, inducing mitochondrial leakage and promoting cell death. The phosphorylated form (mediated by ATM) plays a role in the DNA damage response and is involved in the ionizing radiation (IR)-induced S phase checkpoint control and in the recruitment of the MRN complex into the IR-induced foci (IRIF). Exhibits histone acetyltransferase (HAT) activity which specifically acetylates histones H2B and H4 in vitro. In concert with CUL3 and RBX1, promotes the degradation of KAT5 thereby attenuating its ability to acetylate and activate ATM. Can elicit oncogenic or tumor suppressor activities depending on the tissue or cell type. In Rattus norvegicus (Rat), this protein is Cyclic AMP-dependent transcription factor ATF-2 (Atf2).